A 788-amino-acid chain; its full sequence is Endonuclease MutS2 (788 aa).

Residue 332 to 339 (GPNTGGKT) coordinates ATP. Residues 713 to 788 (VDLRGMDAEE…GTGVTVVELK (76 aa)) form the Smr domain.

The protein belongs to the DNA mismatch repair MutS family. MutS2 subfamily. As to quaternary structure, homodimer. Binds to stalled ribosomes, contacting rRNA.

Endonuclease that is involved in the suppression of homologous recombination and thus may have a key role in the control of bacterial genetic diversity. Functionally, acts as a ribosome collision sensor, splitting the ribosome into its 2 subunits. Detects stalled/collided 70S ribosomes which it binds and splits by an ATP-hydrolysis driven conformational change. Acts upstream of the ribosome quality control system (RQC), a ribosome-associated complex that mediates the extraction of incompletely synthesized nascent chains from stalled ribosomes and their subsequent degradation. Probably generates substrates for RQC. In Clostridium botulinum (strain ATCC 19397 / Type A), this protein is Endonuclease MutS2.